A 316-amino-acid chain; its full sequence is Pantothenate kinase (316 aa).

96–103 (GSVAVGKS) is an ATP binding site.

It belongs to the prokaryotic pantothenate kinase family.

The protein localises to the cytoplasm. The catalysed reaction is (R)-pantothenate + ATP = (R)-4'-phosphopantothenate + ADP + H(+). It functions in the pathway cofactor biosynthesis; coenzyme A biosynthesis; CoA from (R)-pantothenate: step 1/5. This is Pantothenate kinase from Shouchella clausii (strain KSM-K16) (Alkalihalobacillus clausii).